A 245-amino-acid polypeptide reads, in one-letter code: 1-(5-phosphoribosyl)-5-[(5-phosphoribosylamino)methylideneamino] imidazole-4-carboxamide isomerase (245 aa).

The active-site Proton acceptor is Asp-8. Asp-129 acts as the Proton donor in catalysis.

This sequence belongs to the HisA/HisF family.

It localises to the cytoplasm. It carries out the reaction 1-(5-phospho-beta-D-ribosyl)-5-[(5-phospho-beta-D-ribosylamino)methylideneamino]imidazole-4-carboxamide = 5-[(5-phospho-1-deoxy-D-ribulos-1-ylimino)methylamino]-1-(5-phospho-beta-D-ribosyl)imidazole-4-carboxamide. It functions in the pathway amino-acid biosynthesis; L-histidine biosynthesis; L-histidine from 5-phospho-alpha-D-ribose 1-diphosphate: step 4/9. In Pelobacter propionicus (strain DSM 2379 / NBRC 103807 / OttBd1), this protein is 1-(5-phosphoribosyl)-5-[(5-phosphoribosylamino)methylideneamino] imidazole-4-carboxamide isomerase.